Consider the following 293-residue polypeptide: Pyridoxal 5'-phosphate synthase subunit PdxS (293 aa).

Position 23 (Asp23) interacts with D-ribose 5-phosphate. The active-site Schiff-base intermediate with D-ribose 5-phosphate is Lys80. A D-ribose 5-phosphate-binding site is contributed by Gly152. Arg164 lines the D-glyceraldehyde 3-phosphate pocket. D-ribose 5-phosphate contacts are provided by residues Gly213 and 234 to 235; that span reads GS.

Belongs to the PdxS/SNZ family. As to quaternary structure, in the presence of PdxT, forms a dodecamer of heterodimers.

It catalyses the reaction aldehydo-D-ribose 5-phosphate + D-glyceraldehyde 3-phosphate + L-glutamine = pyridoxal 5'-phosphate + L-glutamate + phosphate + 3 H2O + H(+). Its pathway is cofactor biosynthesis; pyridoxal 5'-phosphate biosynthesis. Catalyzes the formation of pyridoxal 5'-phosphate from ribose 5-phosphate (RBP), glyceraldehyde 3-phosphate (G3P) and ammonia. The ammonia is provided by the PdxT subunit. Can also use ribulose 5-phosphate and dihydroxyacetone phosphate as substrates, resulting from enzyme-catalyzed isomerization of RBP and G3P, respectively. The sequence is that of Pyridoxal 5'-phosphate synthase subunit PdxS from Syntrophus aciditrophicus (strain SB).